A 426-amino-acid chain; its full sequence is Tyrosine--tRNA ligase (426 aa).

Position 35 (Tyr-35) interacts with L-tyrosine. A 'HIGH' region motif is present at residues 40 to 49 (PTADSLHIGH). Positions 172 and 176 each coordinate L-tyrosine. The short motif at 232–236 (KLGKS) is the 'KMSKS' region element. Lys-235 lines the ATP pocket. One can recognise an S4 RNA-binding domain in the interval 357 to 414 (ENIKDILVNSKLSKSKNNAKSVILSSSIRINNKKQKSIDFMFKKEDKLFNLFTLIKKG).

It belongs to the class-I aminoacyl-tRNA synthetase family. TyrS type 1 subfamily. Homodimer.

It is found in the cytoplasm. The catalysed reaction is tRNA(Tyr) + L-tyrosine + ATP = L-tyrosyl-tRNA(Tyr) + AMP + diphosphate + H(+). Functionally, catalyzes the attachment of tyrosine to tRNA(Tyr) in a two-step reaction: tyrosine is first activated by ATP to form Tyr-AMP and then transferred to the acceptor end of tRNA(Tyr). This chain is Tyrosine--tRNA ligase, found in Wigglesworthia glossinidia brevipalpis.